A 291-amino-acid polypeptide reads, in one-letter code: Small ribosomal subunit biogenesis GTPase RsgA (291 aa).

The CP-type G domain occupies 63 to 221 (NNELKRPPVS…IADTPGFSAL (159 aa)). GTP is bound by residues 112-115 (TKHD) and 164-172 (GQSGVGKST). Zn(2+) contacts are provided by Cys245, Cys250, His252, and Cys258.

This sequence belongs to the TRAFAC class YlqF/YawG GTPase family. RsgA subfamily. As to quaternary structure, monomer. Associates with 30S ribosomal subunit, binds 16S rRNA. The cofactor is Zn(2+).

The protein resides in the cytoplasm. Its function is as follows. One of several proteins that assist in the late maturation steps of the functional core of the 30S ribosomal subunit. Helps release RbfA from mature subunits. May play a role in the assembly of ribosomal proteins into the subunit. Circularly permuted GTPase that catalyzes slow GTP hydrolysis, GTPase activity is stimulated by the 30S ribosomal subunit. This chain is Small ribosomal subunit biogenesis GTPase RsgA, found in Staphylococcus epidermidis (strain ATCC 12228 / FDA PCI 1200).